The primary structure comprises 232 residues: 7-cyano-7-deazaguanine synthase (232 aa).

8–18 (LSGGLDSATVL) provides a ligand contact to ATP. 4 residues coordinate Zn(2+): Cys-188, Cys-198, Cys-201, and Cys-204.

It belongs to the QueC family. The cofactor is Zn(2+).

The enzyme catalyses 7-carboxy-7-deazaguanine + NH4(+) + ATP = 7-cyano-7-deazaguanine + ADP + phosphate + H2O + H(+). The protein operates within purine metabolism; 7-cyano-7-deazaguanine biosynthesis. In terms of biological role, catalyzes the ATP-dependent conversion of 7-carboxy-7-deazaguanine (CDG) to 7-cyano-7-deazaguanine (preQ(0)). This chain is 7-cyano-7-deazaguanine synthase, found in Nitrosospira multiformis (strain ATCC 25196 / NCIMB 11849 / C 71).